The chain runs to 285 residues: Small ribosomal subunit protein mS23 (285 aa).

Belongs to the mitochondrion-specific ribosomal protein mS23 family. As to quaternary structure, component of the mitochondrial small ribosomal subunit.

The protein resides in the mitochondrion. In Debaryomyces hansenii (strain ATCC 36239 / CBS 767 / BCRC 21394 / JCM 1990 / NBRC 0083 / IGC 2968) (Yeast), this protein is Small ribosomal subunit protein mS23 (RSM25).